A 1386-amino-acid polypeptide reads, in one-letter code: MYPNWGRYGGSSHYPPPPVPPPPPPVALPEASPGPGYSSSTAPAAPSSSGFMSFREQHLAQLQQLQQMHQKQMQCVLQPHHLPPPPLPPPPVMPGGGYGDWQPPPPPMPPPPGPALSYQKQQQYKHQMIHHQRDGPPGLVPMELESPPESPPVPPGSYMPPSQSYMPPPQPPPSYYPPSSAQPYLPPAQPGPSKPQLPPPPSIPSGNKTAIQQEPLESGAKNKTAEQKQAAPEPDPSTMTPQEQQQYWYRQHLLSLQQRTKVHLPGHKKGLVTAKDVPEPIKEEAPGPAASQVAEPLAAEKPPLPPPNEEAPPPLSPEEPQSEDSEDSEDSEEDARFKQLKAIAAHWQAAAAHWQQQQQQRVGFQYQGIMQRHTQLQQILQQYQQVIQHSPHIQTMSLDVQLRHYEMQQQQFQHLFQDWEREFQLWEEQLHSYPHKDQLQEYEKQWKTWQGHMKATQTYLQEKVNSFQTVKSQYLGNMAMPPPFVPYSQMPPPLPTMPPPVLPPSLPPPVMPPALPTSIPPPGMPPPVMPPSLPTSVPPPGMPPSLSSGPPPVLPPPALSSAGSPPVLPPPALPGGPPILPLPPLSSATPPPGIPPPGAPQGMPPQLTAPLPPASGSQNSQIPEKPRQALLPTPVSFGSTPPSPYHPPPQSEQVNSKPLNKVFSSEQGLGESSALSQSIIAAKDTPVKSGGLLADPPKGSFLEGPRGPREQKEQLQKLKDFGSEPQMADHLPPPDSRLQNPSRPGMYPPPGSYRPPPPMGKPPGSIVRPSAPPARSSIPMTRPPVPIPPPPPPPPPPPPPPPVIKSKTSSVKQERWDEDSFFGLWDTNDDQGLNSEFKRDTATIPSAPVLPPPPVHSSIPPPGPMPMGMPPMSKPPPVQHTVDYGHGRDMPTNKVEQIPYGERITLRPDPLPERSTFDADHAGQRDRYDRDRDREPYFDRPSNITDHRDFKRDRETHRDRDRDRVLDYERDRFDRERRPRDDRNQSYRDKKDHSSSRRGGFDRPSYDRKSDRPPYEGPPMFGGERRTYPEERMPLPAPALGHQPPPVPRVEKKPESKNVDDILKPPGRESRPERIVVIMRGLPGSGKTHVAKLIRDKEVEFGGPAPRVLSLDDYFIAEVEKEEKDPDSGKKVKKKVMEYEYEADMEETYRTSMFKTFKKTLDDGFFPFIILDAINDRVRHFDQFWSAAKTKGFEVYLAEMSADNQTCGKRNIHGRKLKEINKMAEHWEVAPRHMMRLDIRSLLQDAAIEEVEMEDFDANIEDQKEEKKDAEEEESELGYIPKSKWEMDTSEAKLDKLDGLRTGTKRKRDWEAIASRMEDYLQLPDDYETRASEPGKKRVRWADLEEKKDADRKRAIGFVVGQTDWEKITDESGHLAERALNRTKYI.

Disordered regions lie at residues methionine 1–arginine 336 and threonine 517–arginine 1068. Residues tyrosine 14 to alanine 27 are compositionally biased toward pro residues. Low complexity-rich tracts occupy residues alanine 31–glycine 50 and leucine 59–histidine 80. Pro residues-rich tracts occupy residues histidine 81–methionine 93, glutamine 102–proline 114, proline 148–tyrosine 158, methionine 166–tyrosine 176, and tyrosine 184–isoleucine 203. Over residues serine 237 to arginine 259 the composition is skewed to polar residues. Basic residues predominate over residues threonine 260–glycine 270. Positions aspartate 276–alanine 285 are enriched in basic and acidic residues. The span at proline 302–proline 317 shows a compositional bias: pro residues. The span at proline 320–glutamate 333 shows a compositional bias: acidic residues. Composition is skewed to pro residues over residues threonine 517–alanine 558, proline 566–methionine 603, and proline 641–glutamine 650. Over residues serine 651–glutamine 667 the composition is skewed to polar residues. At lysine 683 the chain carries N6-methyllysine. Over residues arginine 706–glycine 722 the composition is skewed to basic and acidic residues. Over residues methionine 746–lysine 761 the composition is skewed to pro residues. Over residues proline 762–proline 779 the composition is skewed to low complexity. Pro residues-rich tracts occupy residues threonine 781–valine 803 and proline 848–valine 878. A Glycyl lysine isopeptide (Lys-Gly) (interchain with G-Cter in SUMO2) cross-link involves residue lysine 894. Composition is skewed to basic and acidic residues over residues isoleucine 904–phenylalanine 938, threonine 945–proline 1014, glycine 1023–methionine 1033, and arginine 1049–arginine 1068. Lysine 951 is covalently cross-linked (Glycyl lysine isopeptide (Lys-Gly) (interchain with G-Cter in SUMO2)). The involved in interaction with PPP1CA stretch occupies residues lysine 1336 to aspartate 1343.

In terms of assembly, interacts with PPP1CA and NCOA5. Forms a complex with ILF2, ILF3, KHDRBS1, RBMX, NCOA5 and PPP1CA.

The protein resides in the nucleus. Its subcellular location is the nucleus speckle. Its function is as follows. Plays a role in the reduction of telomerase activity during differentiation of embryonic stem cells by binding to the core promoter of TERT and controlling its down-regulation. In Mus musculus (Mouse), this protein is YLP motif-containing protein 1 (Ylpm1).